Consider the following 199-residue polypeptide: Large ribosomal subunit protein uL4 (199 aa).

This sequence belongs to the universal ribosomal protein uL4 family. In terms of assembly, part of the 50S ribosomal subunit.

Its function is as follows. One of the primary rRNA binding proteins, this protein initially binds near the 5'-end of the 23S rRNA. It is important during the early stages of 50S assembly. It makes multiple contacts with different domains of the 23S rRNA in the assembled 50S subunit and ribosome. Forms part of the polypeptide exit tunnel. The protein is Large ribosomal subunit protein uL4 of Aquifex pyrophilus.